The sequence spans 413 residues: Gamma-glutamyl phosphate reductase (413 aa).

Belongs to the gamma-glutamyl phosphate reductase family.

It is found in the cytoplasm. The enzyme catalyses L-glutamate 5-semialdehyde + phosphate + NADP(+) = L-glutamyl 5-phosphate + NADPH + H(+). It functions in the pathway amino-acid biosynthesis; L-proline biosynthesis; L-glutamate 5-semialdehyde from L-glutamate: step 2/2. Its function is as follows. Catalyzes the NADPH-dependent reduction of L-glutamate 5-phosphate into L-glutamate 5-semialdehyde and phosphate. The product spontaneously undergoes cyclization to form 1-pyrroline-5-carboxylate. The polypeptide is Gamma-glutamyl phosphate reductase (Alkaliphilus oremlandii (strain OhILAs) (Clostridium oremlandii (strain OhILAs))).